Consider the following 742-residue polypeptide: Phosphoribosylformylglycinamidine synthase subunit PurL (742 aa).

His54 is an active-site residue. ATP-binding residues include Tyr57 and Lys96. Glu98 contacts Mg(2+). Substrate is bound by residues 99 to 102 and Arg121; that span reads SHNH. His100 (proton acceptor) is an active-site residue. Asp122 is a binding site for Mg(2+). Residues Gly225 and Gln245 each coordinate substrate. Residue Asp273 participates in Mg(2+) binding. 317–319 is a substrate binding site; the sequence is ESQ. Residue Gly537 participates in ATP binding. Asn538 provides a ligand contact to Mg(2+). Position 540 (Ser540) interacts with substrate.

It belongs to the FGAMS family. As to quaternary structure, monomer. Part of the FGAM synthase complex composed of 1 PurL, 1 PurQ and 2 PurS subunits.

Its subcellular location is the cytoplasm. It catalyses the reaction N(2)-formyl-N(1)-(5-phospho-beta-D-ribosyl)glycinamide + L-glutamine + ATP + H2O = 2-formamido-N(1)-(5-O-phospho-beta-D-ribosyl)acetamidine + L-glutamate + ADP + phosphate + H(+). It carries out the reaction L-glutamine + H2O = L-glutamate + NH4(+). It participates in purine metabolism; IMP biosynthesis via de novo pathway; 5-amino-1-(5-phospho-D-ribosyl)imidazole from N(2)-formyl-N(1)-(5-phospho-D-ribosyl)glycinamide: step 1/2. In terms of biological role, part of the phosphoribosylformylglycinamidine synthase complex involved in the purines biosynthetic pathway. Catalyzes the ATP-dependent conversion of formylglycinamide ribonucleotide (FGAR) and glutamine to yield formylglycinamidine ribonucleotide (FGAM) and glutamate. The FGAM synthase complex is composed of three subunits. PurQ produces an ammonia molecule by converting glutamine to glutamate. PurL transfers the ammonia molecule to FGAR to form FGAM in an ATP-dependent manner. PurS interacts with PurQ and PurL and is thought to assist in the transfer of the ammonia molecule from PurQ to PurL. The chain is Phosphoribosylformylglycinamidine synthase subunit PurL from Bacillus subtilis (strain 168).